The sequence spans 176 residues: NAD(P)H-quinone oxidoreductase subunit J (176 aa).

It belongs to the complex I 30 kDa subunit family. As to quaternary structure, NDH-1 can be composed of about 15 different subunits; different subcomplexes with different compositions have been identified which probably have different functions.

It is found in the cellular thylakoid membrane. It catalyses the reaction a plastoquinone + NADH + (n+1) H(+)(in) = a plastoquinol + NAD(+) + n H(+)(out). The catalysed reaction is a plastoquinone + NADPH + (n+1) H(+)(in) = a plastoquinol + NADP(+) + n H(+)(out). Its function is as follows. NDH-1 shuttles electrons from an unknown electron donor, via FMN and iron-sulfur (Fe-S) centers, to quinones in the respiratory and/or the photosynthetic chain. The immediate electron acceptor for the enzyme in this species is believed to be plastoquinone. Couples the redox reaction to proton translocation, and thus conserves the redox energy in a proton gradient. Cyanobacterial NDH-1 also plays a role in inorganic carbon-concentration. The sequence is that of NAD(P)H-quinone oxidoreductase subunit J from Prochlorococcus marinus (strain MIT 9515).